Here is a 457-residue protein sequence, read N- to C-terminus: D(1B) dopamine receptor (457 aa).

Over 1-41 the chain is Extracellular; the sequence is MYQPFQHLDSDQVASWQSPEMLMNKSVSRESQRRKELVAGQ. A glycan (N-linked (GlcNAc...) asparagine) is linked at Asn24. Residues 42 to 67 traverse the membrane as a helical segment; the sequence is IVTGSLLLLLIFWTLFGNILVCTAVM. Residues 68–78 lie on the Cytoplasmic side of the membrane; that stretch reads RFRHLRSRVTN. Residues 79–105 form a helical membrane-spanning segment; sequence IFIVSLAVSDLLVALLVMPWKAVAEVA. Residues 106-114 lie on the Extracellular side of the membrane; it reads GHWPFGAFC. A disulfide bond links Cys114 and Cys199. A helical membrane pass occupies residues 115 to 137; it reads DIWVAFDIMCSTASILNLCVISV. Topologically, residues 138 to 156 are cytoplasmic; sequence DRYWAISSPFRYERKMTQR. A helical transmembrane segment spans residues 157–181; that stretch reads VALLMISTAWALSVLISFIPVQLSW. Topologically, residues 182-205 are extracellular; that stretch reads HKSETEDHLLSNHSTGNCDSSLNR. The chain crosses the membrane as a helical span at residues 206–231; that stretch reads TYAISSSLISFYIPVAIMIVTYTRIY. Over 232-282 the chain is Cytoplasmic; that stretch reads RIAQIQIKRISTLERAAEHAQSCRSNRVDSCSRHHQTSLRTSIKKETKVLK. A helical membrane pass occupies residues 283 to 309; that stretch reads TLSIIMGVFVCCWLPFFILNCMVPFCD. At 310 to 326 the chain is on the extracellular side; sequence RSPGHPQAGLPCVSETT. Residues 327 to 351 traverse the membrane as a helical segment; sequence FDIFVWFGWANSSLNPIIYAFNADF. Residues 352–457 lie on the Cytoplasmic side of the membrane; that stretch reads RKVFSSLLGC…ITPSMSNGIH (106 aa). The S-palmitoyl cysteine moiety is linked to residue Cys361.

This sequence belongs to the G-protein coupled receptor 1 family. In terms of tissue distribution, brain and kidney.

It is found in the cell membrane. Dopamine receptor whose activity is mediated by G proteins which activate adenylyl cyclase. This is D(1B) dopamine receptor (drd5) from Xenopus laevis (African clawed frog).